The sequence spans 819 residues: Protein EFR3 homolog A (819 aa).

Residues Ser360, Ser363, Ser420, and Ser692 each carry the phosphoserine modification.

This sequence belongs to the EFR3 family. As to quaternary structure, component of a phosphatidylinositol 4-kinase (PI4K) complex, composed of PI4KA, EFR3 (EFR3A or EFR3B), TTC7 (TTC7A or TTC7B) and HYCC (HYCC1 or HYCC2). In terms of processing, palmitoylated at its N-terminus, anchoring the protein to the plasma membrane. As to expression, widely expressed. Expressed in neurons of the superior olivary complex of the auditory brainstem. Also expressed at lower levels in the cochlear nucleus, the lateral leminiscal nuclei and the inferior collicus.

Its subcellular location is the cell membrane. The protein resides in the cytoplasm. It is found in the cytosol. In terms of biological role, component of a complex required to localize phosphatidylinositol 4-kinase (PI4K) to the plasma membrane. The complex acts as a regulator of phosphatidylinositol 4-phosphate (PtdIns(4)P) synthesis. In the complex, EFR3A probably acts as the membrane-anchoring component. Also involved in responsiveness to G-protein-coupled receptors; it is however unclear whether this role is direct or indirect. The sequence is that of Protein EFR3 homolog A from Mus musculus (Mouse).